The following is a 249-amino-acid chain: Uridylate kinase (249 aa).

15–18 provides a ligand contact to ATP; the sequence is KLSG. Positions 23-28 are involved in allosteric activation by GTP; it reads GEEGFG. Residue G57 coordinates UMP. ATP is bound by residues G58 and R62. UMP contacts are provided by residues D77 and 138–145; that span reads TGNPFFTT. Positions 165, 171, and 174 each coordinate ATP.

It belongs to the UMP kinase family. In terms of assembly, homohexamer.

The protein localises to the cytoplasm. The catalysed reaction is UMP + ATP = UDP + ADP. Its pathway is pyrimidine metabolism; CTP biosynthesis via de novo pathway; UDP from UMP (UMPK route): step 1/1. Allosterically activated by GTP. Inhibited by UTP. Catalyzes the reversible phosphorylation of UMP to UDP. The protein is Uridylate kinase of Psychromonas ingrahamii (strain DSM 17664 / CCUG 51855 / 37).